Consider the following 443-residue polypeptide: Thymidine phosphorylase (443 aa).

This sequence belongs to the thymidine/pyrimidine-nucleoside phosphorylase family. In terms of assembly, homodimer.

It catalyses the reaction thymidine + phosphate = 2-deoxy-alpha-D-ribose 1-phosphate + thymine. Its pathway is pyrimidine metabolism; dTMP biosynthesis via salvage pathway; dTMP from thymine: step 1/2. Its function is as follows. The enzymes which catalyze the reversible phosphorolysis of pyrimidine nucleosides are involved in the degradation of these compounds and in their utilization as carbon and energy sources, or in the rescue of pyrimidine bases for nucleotide synthesis. The chain is Thymidine phosphorylase from Shewanella baltica (strain OS195).